The following is a 159-amino-acid chain: MAKEGLPEITLPDATGLRVAVVTARWNAEICDRLHDHAVTAGRAAGAEVSEYRVVGALELPVVVQELARTHDAVVALGCVIRGGTPHFDYVCDSVTEGLTRIALDTSTPIGNGVLTTNTEEQAIERSGAEGSVEDKGAEAMVAALDTALVLSRIRADRG.

Residues W26, 57–59 (ALE), and 79–81 (CVI) each bind 5-amino-6-(D-ribitylamino)uracil. 84 to 85 (GT) provides a ligand contact to (2S)-2-hydroxy-3-oxobutyl phosphate. H87 (proton donor) is an active-site residue. N112 contacts 5-amino-6-(D-ribitylamino)uracil. A (2S)-2-hydroxy-3-oxobutyl phosphate-binding site is contributed by R126.

Belongs to the DMRL synthase family.

The enzyme catalyses (2S)-2-hydroxy-3-oxobutyl phosphate + 5-amino-6-(D-ribitylamino)uracil = 6,7-dimethyl-8-(1-D-ribityl)lumazine + phosphate + 2 H2O + H(+). It functions in the pathway cofactor biosynthesis; riboflavin biosynthesis; riboflavin from 2-hydroxy-3-oxobutyl phosphate and 5-amino-6-(D-ribitylamino)uracil: step 1/2. Catalyzes the formation of 6,7-dimethyl-8-ribityllumazine by condensation of 5-amino-6-(D-ribitylamino)uracil with 3,4-dihydroxy-2-butanone 4-phosphate. This is the penultimate step in the biosynthesis of riboflavin. This is 6,7-dimethyl-8-ribityllumazine synthase from Corynebacterium efficiens (strain DSM 44549 / YS-314 / AJ 12310 / JCM 11189 / NBRC 100395).